A 161-amino-acid polypeptide reads, in one-letter code: Dihydrofolate reductase (161 aa).

Residues 2-157 enclose the DHFR domain; that stretch reads TLSIIVAHDK…IPHTFLHLVR (156 aa). Residue 6–8 coordinates substrate; that stretch reads IVA. NADP(+)-binding positions include 7-8 and 15-20; these read VA and IGYQNQ. A substrate-binding site is contributed by Asp-28. 44-47 contributes to the NADP(+) binding site; it reads GRKT. Arg-58 provides a ligand contact to substrate. Residues 63-66 and 93-98 each bind NADP(+); these read LTNQ and FGGQTL. Residue Thr-112 participates in substrate binding.

Belongs to the dihydrofolate reductase family.

It catalyses the reaction (6S)-5,6,7,8-tetrahydrofolate + NADP(+) = 7,8-dihydrofolate + NADPH + H(+). It participates in cofactor biosynthesis; tetrahydrofolate biosynthesis; 5,6,7,8-tetrahydrofolate from 7,8-dihydrofolate: step 1/1. Key enzyme in folate metabolism. Catalyzes an essential reaction for de novo glycine and purine synthesis, and for DNA precursor synthesis. In Staphylococcus epidermidis, this protein is Dihydrofolate reductase (folA).